Reading from the N-terminus, the 273-residue chain is MIELKDVQGFRPDYEIPIKRAGIKSFKRRVKLNYNNESFDSYVDVSISVSLNPDRKGLDMSRTIESVRSSYNLNDVAYDIYNDLFSRINYSSSGYVNVSFDFYYNNKIYPVSLIAEGDKNDVKRYVEVSAEGMTVCPCAMETIRSIMLYDYNVSYGDIGISHNQRNKASLKIQYIKDAHLERLIDILESSFSYPVRNMLKRYDEGKMIIEAHKRPKFVEDVVREIAYKAAFMEPEMNLYMDVRSESFESIHPHNAYAEIEDYTANIRSYLKNR.

It belongs to the GTP cyclohydrolase IV family. As to quaternary structure, homodimer. Fe(2+) is required as a cofactor.

The enzyme catalyses GTP + H2O = 7,8-dihydroneopterin 2',3'-cyclic phosphate + formate + diphosphate + H(+). It participates in cofactor biosynthesis; 5,6,7,8-tetrahydromethanopterin biosynthesis. In terms of biological role, converts GTP to 7,8-dihydro-D-neopterin 2',3'-cyclic phosphate, the first intermediate in the biosynthesis of coenzyme methanopterin. The protein is GTP cyclohydrolase MptA of Picrophilus torridus (strain ATCC 700027 / DSM 9790 / JCM 10055 / NBRC 100828 / KAW 2/3).